The primary structure comprises 266 residues: Succinate dehydrogenase [ubiquinone] iron-sulfur subunit, mitochondrial (266 aa).

A mitochondrion-targeting transit peptide spans M1–A20. The 92-residue stretch at F36–M127 folds into the 2Fe-2S ferredoxin-type domain. Residues C87, C92, C95, and C107 each contribute to the [2Fe-2S] cluster site. The 4Fe-4S ferredoxin-type domain occupies D169–Y199. 3 residues coordinate [4Fe-4S] cluster: C179, C182, and C185. Residue C189 coordinates [3Fe-4S] cluster. An a ubiquinone-binding site is contributed by W194. [3Fe-4S] cluster is bound by residues C236 and C242. C246 contributes to the [4Fe-4S] cluster binding site.

The protein belongs to the succinate dehydrogenase/fumarate reductase iron-sulfur protein family. As to quaternary structure, component of complex II composed of four subunits: a flavoprotein (FP), an iron-sulfur protein (IP), and a cytochrome b composed of a large and a small subunit. Requires [2Fe-2S] cluster as cofactor. [3Fe-4S] cluster is required as a cofactor. It depends on [4Fe-4S] cluster as a cofactor.

The protein localises to the mitochondrion inner membrane. It catalyses the reaction a quinone + succinate = fumarate + a quinol. It functions in the pathway carbohydrate metabolism; tricarboxylic acid cycle; fumarate from succinate (eukaryal route): step 1/1. Its function is as follows. Subunit of succinate dehydrogenase (SDH) that is involved in complex II of the mitochondrial electron transport chain and is responsible for transferring electrons from succinate to ubiquinone (coenzyme Q). SDH1 and SDH2 form the catalytic dimer. Electrons flow from succinate to the FAD bound to SDH1, and sequentially through the iron-sulfur clusters bound to SDH2 and enter the membrane dimer formed by SDH3 and SDH4. This is Succinate dehydrogenase [ubiquinone] iron-sulfur subunit, mitochondrial (SDH2) from Saccharomyces cerevisiae (strain ATCC 204508 / S288c) (Baker's yeast).